A 998-amino-acid chain; its full sequence is UPF0182 protein AAur_2732 (998 aa).

7 helical membrane passes run 18–38 (GALT…IFFA), 64–84 (IITF…AIRI), 115–135 (VVMI…AASQ), 168–188 (FLGF…IAGI), 211–231 (QIHI…NFWL), 260–280 (AILA…AIIG), and 287–307 (IGTA…PWVI). 3 disordered regions span residues 490 to 518 (GAPD…TFSG), 888 to 923 (LFGG…PTDA), and 971 to 998 (QARL…SPSS). Residues 496 to 509 (PNREQDRPAGREGG) are compositionally biased toward basic and acidic residues. Pro residues predominate over residues 908–919 (TSPPGTTPPPAG). A compositionally biased stretch (low complexity) spans 976-990 (ATPAPTATPGATPSA).

It belongs to the UPF0182 family.

It localises to the cell membrane. The protein is UPF0182 protein AAur_2732 of Paenarthrobacter aurescens (strain TC1).